The following is a 308-amino-acid chain: Methionyl-tRNA formyltransferase (308 aa).

110–113 serves as a coordination point for (6S)-5,6,7,8-tetrahydrofolate; that stretch reads SLLP.

This sequence belongs to the Fmt family.

It catalyses the reaction L-methionyl-tRNA(fMet) + (6R)-10-formyltetrahydrofolate = N-formyl-L-methionyl-tRNA(fMet) + (6S)-5,6,7,8-tetrahydrofolate + H(+). Attaches a formyl group to the free amino group of methionyl-tRNA(fMet). The formyl group appears to play a dual role in the initiator identity of N-formylmethionyl-tRNA by promoting its recognition by IF2 and preventing the misappropriation of this tRNA by the elongation apparatus. The chain is Methionyl-tRNA formyltransferase from Neisseria meningitidis serogroup C / serotype 2a (strain ATCC 700532 / DSM 15464 / FAM18).